The sequence spans 187 residues: Elongation factor P (187 aa).

It belongs to the elongation factor P family.

The protein resides in the cytoplasm. It participates in protein biosynthesis; polypeptide chain elongation. Functionally, involved in peptide bond synthesis. Stimulates efficient translation and peptide-bond synthesis on native or reconstituted 70S ribosomes in vitro. Probably functions indirectly by altering the affinity of the ribosome for aminoacyl-tRNA, thus increasing their reactivity as acceptors for peptidyl transferase. The polypeptide is Elongation factor P (Synechococcus sp. (strain CC9605)).